The chain runs to 287 residues: Diphthine methyl ester synthase (287 aa).

S-adenosyl-L-methionine-binding positions include L9, D84, G87, 112–113 (SI), V163, V221, and H248.

It belongs to the diphthine synthase family.

It is found in the cytoplasm. It carries out the reaction 2-[(3S)-amino-3-carboxypropyl]-L-histidyl-[translation elongation factor 2] + 4 S-adenosyl-L-methionine = diphthine methyl ester-[translation elongation factor 2] + 4 S-adenosyl-L-homocysteine + 3 H(+). The protein operates within protein modification; peptidyl-diphthamide biosynthesis. S-adenosyl-L-methionine-dependent methyltransferase that catalyzes four methylations of the modified target histidine residue in translation elongation factor 2 (EF-2), to form an intermediate called diphthine methyl ester. The four successive methylation reactions represent the second step of diphthamide biosynthesis. The polypeptide is Diphthine methyl ester synthase (DPH5) (Gibberella zeae (strain ATCC MYA-4620 / CBS 123657 / FGSC 9075 / NRRL 31084 / PH-1) (Wheat head blight fungus)).